The chain runs to 192 residues: Xanthine phosphoribosyltransferase (192 aa).

Xanthine contacts are provided by Leu-20 and Asn-27. Position 128–132 (128–132 (ANGQA)) interacts with 5-phospho-alpha-D-ribose 1-diphosphate. Lys-156 serves as a coordination point for xanthine.

The protein belongs to the purine/pyrimidine phosphoribosyltransferase family. Xpt subfamily. As to quaternary structure, homodimer.

The protein resides in the cytoplasm. The catalysed reaction is XMP + diphosphate = xanthine + 5-phospho-alpha-D-ribose 1-diphosphate. It functions in the pathway purine metabolism; XMP biosynthesis via salvage pathway; XMP from xanthine: step 1/1. Functionally, converts the preformed base xanthine, a product of nucleic acid breakdown, to xanthosine 5'-monophosphate (XMP), so it can be reused for RNA or DNA synthesis. The polypeptide is Xanthine phosphoribosyltransferase (Listeria innocua serovar 6a (strain ATCC BAA-680 / CLIP 11262)).